Here is a 147-residue protein sequence, read N- to C-terminus: Hemoglobin subunit epsilon (147 aa).

In terms of domain architecture, Globin spans 3-147; sequence HFTPEEKCII…VAIALAHKYH (145 aa). S51 carries the phosphoserine modification. 2 residues coordinate heme b: H64 and H93.

The protein belongs to the globin family. Red blood cells.

Hemoglobin epsilon chain is a beta-type chain found in early embryos. This Oryctolagus cuniculus (Rabbit) protein is Hemoglobin subunit epsilon (HBE1).